The chain runs to 386 residues: MGAGGRMSVAPNNSKCEKKESRSVKRVPHTKPPFTLGQLKQAIPSHCFKRSLLRSFSYVVYDLSLSFIFYSIATTYFHLLPSPITYIAWPVYWAFQGCILTSVWVLGHECGHHAFSEYNWLDDTIGLILHSSLLVPYFSFKISHRRHHSNIASLERDEVFVPRLKSAIPWYSKYLNNPPGRALTLVATLFIGWPLYLAFNVSGRYYDRFACHYDPYSPIYSDRERLQIYISDAMIFVAAYVLYKIAMAKGLAWLVCIYGVPLLIVNALVVTITSLQHTHVALPHYDSSEWDWLRGGLATVDRDYGVFNKIFHNATDTHVIHHLFSSMPHYHGVEATRAIKPILGDYYLFDDTPIHVALWREAKECLFVEPDEGDNNNGVFWYSNKF.

Residues 1 to 28 (MGAGGRMSVAPNNSKCEKKESRSVKRVP) form a disordered region. A run of 2 helical transmembrane segments spans residues 65–85 (LSFIFYSIATTYFHLLPSPIT) and 87–107 (IAWPVYWAFQGCILTSVWVLG). The Histidine box-1 signature appears at 108–112 (HECGH). Positions 144 to 148 (HRRHH) match the Histidine box-2 motif. The next 3 membrane-spanning stretches (helical) occupy residues 182-202 (ALTLVATLFIGWPLYLAFNVS), 228-248 (IYISDAMIFVAAYVLYKIAMA), and 250-270 (GLAWLVCIYGVPLLIVNALVV). Residues 318–322 (HVIHH) carry the Histidine box-3 motif.

The protein belongs to the fatty acid desaturase type 1 family. As to expression, expressed exclusively in developing seeds.

It localises to the endoplasmic reticulum membrane. It catalyses the reaction a (9Z,12Z)-octadecadienoyl-containing glycerolipid + 2 Fe(II)-[cytochrome b5] + O2 + 2 H(+) = a (9Z,11E,13E)-octadecatrienoyl-containing glycerolipid + 2 Fe(III)-[cytochrome b5] + 2 H2O. The catalysed reaction is (9Z,12Z,15Z)-octadecatrienoyl-containing glycerolipid + 2 Fe(II)-[cytochrome b5] + O2 + 2 H(+) = a (9Z,11E,13E,15Z)-octadecatetraenoyl-containing glycerolipid + 2 Fe(III)-[cytochrome b5] + 2 H2O. It carries out the reaction a (9Z)-octadecenoyl-containing glycerolipid + 2 Fe(II)-[cytochrome b5] + O2 + 2 H(+) = a (9Z,12E)-octadecadienoyl-containing glycerolipid + 2 Fe(III)-[cytochrome b5] + 2 H2O. The enzyme catalyses a (9Z)-hexadecenoyl-containing glycerolipid + 2 Fe(II)-[cytochrome b5] + O2 + 2 H(+) = a (9Z,12E)-hexadecadienoyl-containing glycerolipid + 2 Fe(III)-[cytochrome b5] + 2 H2O. It functions in the pathway lipid metabolism; polyunsaturated fatty acid biosynthesis. Its function is as follows. Converts linoleic acid to alpha-eleostearic acid (18:3(9Z,11E,13E)) and alpha-linolenic acid to alpha-parinaric acid (18:4(9Z,11E,13E,15Z)). Converts a single cis double bond at carbon 12 to two conjugated trans bonds at positions 11 and 13. Can also act as a 12(E) desaturase when acting on the monounsaturated fatty acids oleate and palmitoleate, stereoselectively introducing a trans double bond. The protein is Bifunctional desaturase/conjugase FADX of Vernicia fordii (Tung).